We begin with the raw amino-acid sequence, 163 residues long: Phosphopantetheine adenylyltransferase (163 aa).

A substrate-binding site is contributed by serine 9. ATP is bound by residues 9–10 and histidine 17; that span reads SF. Lysine 41, leucine 73, and lysine 87 together coordinate substrate. ATP is bound by residues 88–90, glutamate 98, and 124–130; these read GLR and YTYVSST.

The protein belongs to the bacterial CoaD family. In terms of assembly, homohexamer. Requires Mg(2+) as cofactor.

It is found in the cytoplasm. The enzyme catalyses (R)-4'-phosphopantetheine + ATP + H(+) = 3'-dephospho-CoA + diphosphate. Its pathway is cofactor biosynthesis; coenzyme A biosynthesis; CoA from (R)-pantothenate: step 4/5. Functionally, reversibly transfers an adenylyl group from ATP to 4'-phosphopantetheine, yielding dephospho-CoA (dPCoA) and pyrophosphate. The protein is Phosphopantetheine adenylyltransferase of Fusobacterium nucleatum subsp. nucleatum (strain ATCC 25586 / DSM 15643 / BCRC 10681 / CIP 101130 / JCM 8532 / KCTC 2640 / LMG 13131 / VPI 4355).